We begin with the raw amino-acid sequence, 319 residues long: Acetyl esterase (319 aa).

The Involved in the stabilization of the negatively charged intermediate by the formation of the oxyanion hole motif lies at 91-93; sequence HGG. Residues Ser-165, Asp-262, and His-292 contribute to the active site.

The protein belongs to the 'GDXG' lipolytic enzyme family. In terms of assembly, homodimer. Interacts with MalT and MelA.

The protein localises to the cytoplasm. Functionally, displays esterase activity towards short chain fatty esters (acyl chain length of up to 8 carbons). Able to hydrolyze triacetylglycerol (triacetin) and tributyrylglycerol (tributyrin), but not trioleylglycerol (triolein) or cholesterol oleate. Negatively regulates MalT activity by antagonizing maltotriose binding. Inhibits MelA galactosidase activity. The chain is Acetyl esterase from Shigella flexneri.